We begin with the raw amino-acid sequence, 304 residues long: Aspartate carbamoyltransferase catalytic subunit (304 aa).

2 residues coordinate carbamoyl phosphate: arginine 53 and threonine 54. Residue lysine 82 coordinates L-aspartate. Carbamoyl phosphate-binding residues include arginine 103, histidine 131, and glutamine 134. The L-aspartate site is built by arginine 163 and arginine 224. Residues leucine 263 and proline 264 each contribute to the carbamoyl phosphate site.

It belongs to the aspartate/ornithine carbamoyltransferase superfamily. ATCase family. Heterooligomer of catalytic and regulatory chains.

The catalysed reaction is carbamoyl phosphate + L-aspartate = N-carbamoyl-L-aspartate + phosphate + H(+). The protein operates within pyrimidine metabolism; UMP biosynthesis via de novo pathway; (S)-dihydroorotate from bicarbonate: step 2/3. In terms of biological role, catalyzes the condensation of carbamoyl phosphate and aspartate to form carbamoyl aspartate and inorganic phosphate, the committed step in the de novo pyrimidine nucleotide biosynthesis pathway. The sequence is that of Aspartate carbamoyltransferase catalytic subunit from Haloquadratum walsbyi (strain DSM 16790 / HBSQ001).